The primary structure comprises 189 residues: Peptidyl-tRNA hydrolase (189 aa).

Position 15 (tyrosine 15) interacts with tRNA. The Proton acceptor role is filled by histidine 20. TRNA-binding residues include phenylalanine 64 and asparagine 66.

The protein belongs to the PTH family. In terms of assembly, monomer.

The protein localises to the cytoplasm. The enzyme catalyses an N-acyl-L-alpha-aminoacyl-tRNA + H2O = an N-acyl-L-amino acid + a tRNA + H(+). In terms of biological role, hydrolyzes ribosome-free peptidyl-tRNAs (with 1 or more amino acids incorporated), which drop off the ribosome during protein synthesis, or as a result of ribosome stalling. Functionally, catalyzes the release of premature peptidyl moieties from peptidyl-tRNA molecules trapped in stalled 50S ribosomal subunits, and thus maintains levels of free tRNAs and 50S ribosomes. This Persephonella marina (strain DSM 14350 / EX-H1) protein is Peptidyl-tRNA hydrolase.